A 179-amino-acid chain; its full sequence is Ribosome maturation factor RimM (179 aa).

The PRC barrel domain occupies lysine 100–leucine 176.

This sequence belongs to the RimM family. Binds ribosomal protein uS19.

It is found in the cytoplasm. Functionally, an accessory protein needed during the final step in the assembly of 30S ribosomal subunit, possibly for assembly of the head region. Essential for efficient processing of 16S rRNA. May be needed both before and after RbfA during the maturation of 16S rRNA. It has affinity for free ribosomal 30S subunits but not for 70S ribosomes. The polypeptide is Ribosome maturation factor RimM (Prochlorococcus marinus (strain MIT 9215)).